The following is a 1056-amino-acid chain: Kinesin-like protein KIN-5A (1056 aa).

A disordered region spans residues 1–44 (MDRRIGLTSPSPKSTEKSGRDLRSGGDANGGANTNSNSIPRGDK). Residues 14–24 (STEKSGRDLRS) are compositionally biased toward basic and acidic residues. The region spanning 49 to 395 (NVQVILRCRP…LDYAHRAKNI (347 aa)) is the Kinesin motor domain. 135 to 142 (GQTGTGKT) contributes to the ATP binding site. Residues 443-525 (QEEAEKKAMT…STIKEKEYVI (83 aa)) are a coiled coil.

The protein belongs to the TRAFAC class myosin-kinesin ATPase superfamily. Kinesin family. KIN-5/BimC subfamily.

The protein localises to the cytoplasm. Its subcellular location is the cytoskeleton. The protein resides in the spindle. Functionally, responsible for microtubule translocation. May be important for the organization of phragmoplast-specific arrays of microtubules. Plays an essential role in stabilizing the mitotic spindle. Required during mitotic cytokinesis. The sequence is that of Kinesin-like protein KIN-5A from Oryza sativa subsp. japonica (Rice).